The chain runs to 396 residues: MPHFLASHITLPPMPFTQEGYTFVYEAKQCNDSSQSLILVRYEDNEFFLRKAWRGNKNNAILKCEKSTKTQPTGIIKNALKILCAYQKNVISHNLNKNTPRQNLQSPYFQSMDFFLDFAKPCLIEIGFGSGRHLLHLAQSNPHFMCIGIEIHTPSIEQILRQVQLLGLENLYIINGDARILLEILSSHIAQGIYVHFPVPWNKKHHRRIFSPKFFQESLRVLDNNGVLHLRSDDEIYFQDALSLALQQESISLEIHKNQQEVITSKYEARWKKQQKNIYDLKIFHTYKNTNNEKNVKNTQKNFYFDKILRKNLDNYKNFPHKKIANDWFLHIDNLYCAGDIYVLALCFGDFNQPQSKFLQIEFCNNVSARYIGSNPIPTQAAIKAHKYLIQILTQE.

The S-adenosyl-L-methionine site is built by E125, E150, and D177. Substrate-binding residues include K203 and D233.

The protein belongs to the class I-like SAM-binding methyltransferase superfamily. TrmB family.

It carries out the reaction guanosine(46) in tRNA + S-adenosyl-L-methionine = N(7)-methylguanosine(46) in tRNA + S-adenosyl-L-homocysteine. Its pathway is tRNA modification; N(7)-methylguanine-tRNA biosynthesis. Catalyzes the formation of N(7)-methylguanine at position 46 (m7G46) in tRNA. The protein is tRNA (guanine-N(7)-)-methyltransferase of Helicobacter hepaticus (strain ATCC 51449 / 3B1).